The sequence spans 172 residues: MLSGLANPRQAAVQLMNFGLILSTAFMMWKGISVITDSPSPIVVVLSGSMEPAFQRGDLLFLWNRNVLAETSVGEIVVYNVKGKDIPIVHRIVRKFGKGPEAKLLTKGDNNVSDDTELYASGQDYLVRNDIIGSVFAYIPFVGYVTILLSEHPWLKTVMLGLMGLVVVLQRE.

The Cytoplasmic portion of the chain corresponds to 1–14; the sequence is MLSGLANPRQAAVQ. The chain crosses the membrane as a helical; Signal-anchor for type II membrane protein span at residues 15 to 35; it reads LMNFGLILSTAFMMWKGISVI. The Lumenal portion of the chain corresponds to 36–172; it reads TDSPSPIVVV…MGLVVVLQRE (137 aa). Active-site charge relay system residues include Ser-49 and His-90. Residue Asn-111 is glycosylated (N-linked (GlcNAc...) asparagine). The active-site Charge relay system is Asp-115. Residues 158–169 are C-terminal short (CTS) helix; the sequence is VMLGLMGLVVVL.

The protein belongs to the peptidase S26B family. As to quaternary structure, component of the signal peptidase complex (SPC) composed of a catalytic subunit SEC11 and three accessory subunits SPC1, SPC2 and SPC3. The complex induces a local thinning of the ER membrane which is used to measure the length of the signal peptide (SP) h-region of protein substrates. This ensures the selectivity of the complex towards h-regions shorter than 18-20 amino acids. SPC associates with the translocon complex.

The protein resides in the endoplasmic reticulum membrane. It carries out the reaction Cleavage of hydrophobic, N-terminal signal or leader sequences from secreted and periplasmic proteins.. Its function is as follows. Catalytic component of the signal peptidase complex (SPC) which catalyzes the cleavage of N-terminal signal sequences from nascent proteins as they are translocated into the lumen of the endoplasmic reticulum. Specifically cleaves N-terminal signal peptides that contain a hydrophobic alpha-helix (h-region) shorter than 18-20 amino acids. The sequence is that of Signal peptidase complex catalytic subunit sec11 (sec11) from Neurospora crassa (strain ATCC 24698 / 74-OR23-1A / CBS 708.71 / DSM 1257 / FGSC 987).